Reading from the N-terminus, the 282-residue chain is Phospholipid phosphatase 1 (282 aa).

Topologically, residues 1–6 (MFDKPR) are cytoplasmic. Positions 5-7 (PRL) match the PDZ-binding; involved in localization to the apical cell membrane motif. Residues 7–27 (LPYVVLDVICVLLAGLPFIIL) form a helical membrane-spanning segment. Topologically, residues 28–53 (TSRHTPFQRGVFCTDESIKYPYREDT) are extracellular. Residues 54–74 (IPYALLGGIVIPFCIIVMITG) form a helical membrane-spanning segment. The Cytoplasmic segment spans residues 75 to 88 (ETLSVYFNVLHSNS). The helical transmembrane segment at 89–109 (FVSNHYIATIYKAVGAFLFGA) threads the bilayer. Residues 110 to 164 (SASQSLTDIAKYSIGRLRPHFLAVCNPDWSKINCSDGYIENFVCQGNEQKVREGR) lie on the Extracellular side of the membrane. A phosphatase sequence motif I region spans residues 120–128 (KYSIGRLRP). N142 carries an N-linked (GlcNAc...) asparagine glycan. A helical membrane pass occupies residues 165 to 185 (LSFYSGHSSFSMYCMLFVALY). The tract at residues 168-171 (YSGH) is phosphatase sequence motif II. The active-site Proton donors is the H171. At 186-194 (LQARMKGDW) the chain is on the cytoplasmic side. The helical transmembrane segment at 195-215 (ARLLRPMLQFGLVALSIYVGL) threads the bilayer. The tract at residues 216 to 227 (SRVSDYKHHWSD) is phosphatase sequence motif III. At 216 to 229 (SRVSDYKHHWSDVL) the chain is on the extracellular side. H223 serves as the catalytic Nucleophile. Residues 230–250 (IGLIQGAVVAILVVLYVTDFF) traverse the membrane as a helical segment. The Cytoplasmic portion of the chain corresponds to 251 to 282 (KTTESNKERKEDSHTTLHETTNRQSYARNHEP). A compositionally biased stretch (basic and acidic residues) spans 257–271 (KERKEDSHTTLHETT). The tract at residues 257–282 (KERKEDSHTTLHETTNRQSYARNHEP) is disordered. A compositionally biased stretch (polar residues) spans 272 to 282 (NRQSYARNHEP).

Belongs to the PA-phosphatase related phosphoesterase family. As to quaternary structure, forms functional homodimers and homooligomers that are not required for substrate recognition and catalytic activity. Can also form heterooligomers with PLPP2 and PLPP3. Post-translationally, N-glycosylated. N-linked sugars are of the complex type. N-glycosylation is not required for the phosphatase activity.

The protein resides in the cell membrane. It is found in the apical cell membrane. Its subcellular location is the membrane raft. It localises to the membrane. The protein localises to the caveola. The enzyme catalyses a 1,2-diacyl-sn-glycero-3-phosphate + H2O = a 1,2-diacyl-sn-glycerol + phosphate. The catalysed reaction is 1,2-dihexadecanoyl-sn-glycero-3-phosphate + H2O = 1,2-dihexadecanoyl-sn-glycerol + phosphate. It carries out the reaction 1,2-di-(9Z-octadecenoyl)-sn-glycero-3-phosphate + H2O = 1,2-di-(9Z-octadecenoyl)-sn-glycerol + phosphate. It catalyses the reaction a monoacyl-sn-glycero-3-phosphate + H2O = a monoacylglycerol + phosphate. The enzyme catalyses (9Z)-octadecenoyl-sn-glycero-3-phosphate + H2O = (9Z-octadecenoyl)-glycerol + phosphate. The catalysed reaction is a 1-acyl-sn-glycero-3-phosphate + H2O = a 1-acyl-sn-glycerol + phosphate. It carries out the reaction 1-(9Z-octadecenoyl)-sn-glycero-3-phosphate + H2O = 1-(9Z-octadecenoyl)-sn-glycerol + phosphate. It catalyses the reaction a 1,2-diacyl-sn-glycerol 3-diphosphate + H2O = a 1,2-diacyl-sn-glycero-3-phosphate + phosphate + H(+). The enzyme catalyses sphing-4-enine 1-phosphate + H2O = sphing-4-enine + phosphate. The catalysed reaction is an N-acylsphing-4-enine 1-phosphate + H2O = an N-acylsphing-4-enine + phosphate. It carries out the reaction N-(octanoyl)-sphing-4-enine-1-phosphate + H2O = N-octanoylsphing-4-enine + phosphate. It catalyses the reaction N-(9Z-octadecenoyl)-ethanolamine phosphate + H2O = N-(9Z-octadecenoyl) ethanolamine + phosphate. The enzyme catalyses 1-hexadecanoyl-2-(9Z-octadecenoyl)-sn-glycero-3-phosphate + H2O = 1-hexadecanoyl-2-(9Z-octadecenoyl)-sn-glycerol + phosphate. Its pathway is lipid metabolism; phospholipid metabolism. Its activity is regulated as follows. Magnesium-independent phospholipid phosphatase. Insensitive to N-ethylmaleimide. Its function is as follows. Magnesium-independent phospholipid phosphatase of the plasma membrane that catalyzes the dephosphorylation of a variety of glycerolipid and sphingolipid phosphate esters including phosphatidate/PA, lysophosphatidate/LPA, diacylglycerol pyrophosphate/DGPP, sphingosine 1-phosphate/S1P and ceramide 1-phosphate/C1P. Also acts on N-oleoyl ethanolamine phosphate/N-(9Z-octadecenoyl)-ethanolamine phosphate, a potential physiological compound. Through its extracellular phosphatase activity allows both the hydrolysis and the cellular uptake of these bioactive lipid mediators from the milieu, regulating signal transduction in different cellular processes. It is for instance essential for the extracellular hydrolysis of S1P and subsequent conversion into intracellular S1P. Involved in the regulation of inflammation, platelets activation, cell proliferation and migration among other processes. May also have an intracellular activity to regulate phospholipid-mediated signaling pathways. The protein is Phospholipid phosphatase 1 of Rattus norvegicus (Rat).